Consider the following 1611-residue polypeptide: DNA (cytosine-5)-methyltransferase 1 (1611 aa).

Positions 1–120 (MPARTAPARV…SQTSGEDCRV (120 aa)) are interaction with DMAP1. The tract at residues 1–148 (MPARTAPARV…RRSKSDGETK (148 aa)) is interaction with DNMT3A. Interaction with the PRC2/EED-EZH2 complex stretches follow at residues 1–334 (MPAR…TEKK) and 306–603 (KPQV…TIRQ). Serine 15 bears the Phosphoserine mark. A DMAP1-binding domain is found at 16–109 (RAFSLPDDVR…SREANGCLEN (94 aa)). Lysine 70 is subject to N6,N6-dimethyllysine; by EHMT2. The disordered stretch occupies residues 123-328 (AEKGKPPKPV…EEKRRRTTYR (206 aa)). At serine 133 the chain carries Phosphoserine. Position 137 is a phosphothreonine (threonine 137). Serine 141 carries the post-translational modification Phosphoserine. Residue lysine 142 is modified to N6-methyllysine; by SETD7. Serine 143 bears the Phosphoserine; by PKB/AKT1 mark. Residues 149 to 216 (SEVSSSPRIT…TSRERVAGLL (68 aa)) form an interaction with DNMT3B region. 2 positions are modified to phosphoserine: serine 152 and serine 154. At lysine 160 the chain carries N6-acetyllysine. Residues 163–174 (RQTTITSHFPRG) form an interaction with PCNA region. Residues 163-174 (RQTTITSHFPRG) show a composition bias toward low complexity. The residue at position 166 (threonine 166) is a Phosphothreonine. The short motif at 177 to 204 (KRKPEEEPEKVKSDDSVDEEKDQEEKRR) is the Nuclear localization signal element. Basic and acidic residues-rich tracts occupy residues 178–191 (RKPE…KSDD), 199–212 (QEEK…RERV), 220–265 (EPGR…RDVR), 279–311 (KDEK…QVSD), and 319–328 (EEKRRRTTYR). Position 188 is an N6-acetyllysine (lysine 188). Lysine 257 is subject to N6-acetyllysine; alternate. A Glycyl lysine isopeptide (Lys-Gly) (interchain with G-Cter in SUMO2); alternate cross-link involves residue lysine 257. At serine 310 the chain carries Phosphoserine. The tract at residues 329-548 (ELTEKKMTRT…NLNRFTEDSL (220 aa)) is DNA replication foci-targeting sequence. Residues cysteine 351 and cysteine 354 each contribute to the Zn(2+) site. A phosphoserine mark is found at serine 392 and serine 396. Zn(2+) is bound by residues cysteine 412 and histidine 416. Serine 507 and serine 547 each carry phosphoserine. A disordered region spans residues 594–614 (RAERRQTIRQPAKEKDKGPTK). The CXXC-type zinc-finger motif lies at 643–689 (NAFKRRRCGVCEICQQPECGKCKACKDMVKFGGSGRSKQACQKRRCP). Cysteine 650, cysteine 653, cysteine 656, cysteine 661, cysteine 664, cysteine 667, cysteine 683, and cysteine 688 together coordinate Zn(2+). The autoinhibitory linker stretch occupies residues 690–751 (NMAMKEADDD…SYYKKVCIDS (62 aa)). Residues 695-726 (EADDDEEVDDNIPEMPSPKKMHQGKKKKQNKN) are disordered. The span at 696-706 (ADDDEEVDDNI) shows a compositional bias: acidic residues. Serine 711 carries the phosphoserine modification. The segment covering 713 to 725 (KKMHQGKKKKQNK) has biased composition (basic residues). At serine 729 the chain carries Phosphoserine. Residue lysine 746 is modified to N6-acetyllysine. Positions 752-877 (ETLEVGDCVS…QDYARFESPP (126 aa)) constitute a BAH 1 domain. Serine 875 bears the Phosphoserine mark. An N6-acetyllysine mark is found at lysine 888, lysine 954, lysine 958, lysine 972, and lysine 1051. Residues 969–1097 (HYRKYSDYIK…AKSKSFEDPP (129 aa)) enclose the BAH 2 domain. A disordered region spans residues 1091–1126 (KSFEDPPNHARSTGNKGKGKGKGKNRTKSQTCEPSE). Repeat copies occupy residues 1106 to 1107 (KG), 1108 to 1109 (KG), 1110 to 1111 (KG), and 1112 to 1113 (KG). The interval 1106–1115 (KGKGKGKGKN) is 5 X 2 AA tandem repeats of K-G. The span at 1107–1117 (GKGKGKGKNRT) shows a compositional bias: basic residues. Residues lysine 1108, lysine 1110, lysine 1112, lysine 1114, and lysine 1118 each carry the N6-acetyllysine modification. The 5; approximate repeat unit spans residues 1114–1115 (KN). The interval 1118–1611 (KSQTCEPSEL…AKIKEEAAKD (494 aa)) is interaction with the PRC2/EED-EZH2 complex. Positions 1136–1595 (LRTLDVFSGC…LEIKRCMLAK (460 aa)) constitute an SAM-dependent MTase C5-type domain. Positions 1136-1611 (LRTLDVFSGC…AKIKEEAAKD (476 aa)) are catalytic. Residues serine 1143, 1147 to 1148 (GL), 1165 to 1166 (EM), 1187 to 1188 (DC), and cysteine 1188 each bind S-adenosyl-L-methionine. Residue cysteine 1223 is part of the active site. An N6-acetyllysine mark is found at lysine 1346 and lysine 1412. S-adenosyl-L-methionine is bound by residues asparagine 1574 and valine 1576. A Glycyl lysine isopeptide (Lys-Gly) (interchain with G-Cter in SUMO2) cross-link involves residue lysine 1605.

Belongs to the class I-like SAM-binding methyltransferase superfamily. C5-methyltransferase family. In terms of assembly, homodimer. Forms a stable complex with E2F1, BB1 and HDAC1. Forms a complex with DMAP1 and HDAC2, with direct interaction. Interacts with the PRC2/EED-EZH2 complex. Probably part of a corepressor complex containing ZNF304, TRIM28, SETDB1 and DNMT1. Interacts with UHRF1; promoting its recruitment to hemimethylated DNA. Interacts with USP7, promoting its deubiquitination. Interacts with PCNA. Interacts with MBD2 and MBD3. Interacts with DNMT3A and DNMT3B. Interacts with UBC9. Interacts with CSNK1D. Interacts with HDAC1. Interacts with BAZ2A/TIP5. Interacts with SIRT7. Interacts with ZNF263; recruited to the SIX3 promoter along with other proteins involved in chromatin modification and transcriptional corepression where it contributes to transcriptional repression. Interacts with L3MBTL3 and DCAF5; the interaction requires DNMT1 methylation at Lys-142 and is necessary to target DNMT1 for ubiquitination by the CRL4-DCAF5 E3 ubiquitin ligase complex and proteasomal degradation. Interacts with PHF20L1; the interaction requires DNMT1 methylation at Lys-142 and protects DNMT1 from ubiquitination and proteasomal degradation. In terms of processing, sumoylated; sumoylation increases activity. Post-translationally, acetylation on multiple lysines, mainly by KAT2B/PCAF, regulates cell cycle G(2)/M transition. Deacetylation of Lys-1346 and Lys-1412 by SIRT1 increases methyltransferase activity. Phosphorylation of Ser-154 by CDKs is important for enzymatic activity and protein stability. Phosphorylation of Ser-143 by AKT1 prevents methylation by SETD7 thereby increasing DNMT1 stability. In terms of processing, methylation at Lys-142 by SETD7 is necessary for the regulation of DNMT1 proteasomal degradation. Post-translationally, ubiquitinated by UHRF1; interaction with USP7 counteracts ubiquitination by UHRF1 by promoting deubiquitination and preventing degradation by the proteasome.

The protein resides in the nucleus. The catalysed reaction is a 2'-deoxycytidine in DNA + S-adenosyl-L-methionine = a 5-methyl-2'-deoxycytidine in DNA + S-adenosyl-L-homocysteine + H(+). In terms of biological role, methylates CpG residues. Preferentially methylates hemimethylated DNA. Associates with DNA replication sites in S phase maintaining the methylation pattern in the newly synthesized strand, that is essential for epigenetic inheritance. Associates with chromatin during G2 and M phases to maintain DNA methylation independently of replication. It is responsible for maintaining methylation patterns established in development. DNA methylation is coordinated with methylation of histones. Mediates transcriptional repression by direct binding to HDAC2. In association with DNMT3B and via the recruitment of CTCFL/BORIS, involved in activation of BAG1 gene expression by modulating dimethylation of promoter histone H3 at H3K4 and H3K9. Probably forms a corepressor complex required for activated KRAS-mediated promoter hypermethylation and transcriptional silencing of tumor suppressor genes (TSGs) or other tumor-related genes in colorectal cancer (CRC) cells. Also required to maintain a transcriptionally repressive state of genes in undifferentiated embryonic stem cells (ESCs). Associates at promoter regions of tumor suppressor genes (TSGs) leading to their gene silencing. Promotes tumor growth. The protein is DNA (cytosine-5)-methyltransferase 1 (DNMT1) of Bos taurus (Bovine).